The chain runs to 333 residues: Uroporphyrinogen decarboxylase (333 aa).

Substrate is bound by residues Arg22–Arg26, Asp71, Tyr145, Ser200, and His310.

This sequence belongs to the uroporphyrinogen decarboxylase family. As to quaternary structure, homodimer.

It is found in the cytoplasm. It catalyses the reaction uroporphyrinogen III + 4 H(+) = coproporphyrinogen III + 4 CO2. Its pathway is porphyrin-containing compound metabolism; protoporphyrin-IX biosynthesis; coproporphyrinogen-III from 5-aminolevulinate: step 4/4. Catalyzes the decarboxylation of four acetate groups of uroporphyrinogen-III to yield coproporphyrinogen-III. The polypeptide is Uroporphyrinogen decarboxylase (Thermoplasma acidophilum (strain ATCC 25905 / DSM 1728 / JCM 9062 / NBRC 15155 / AMRC-C165)).